We begin with the raw amino-acid sequence, 524 residues long: MVERKRIEIPEGVKVKESVGEEAEFPFDISPMYEGERIRKGDMYVELGGPTQPGFELVMALPMDQVEDMKVTLIGPDLDEMEEGQAYPYAMIYYIAGEMVETDLEPVIERRNHDFQNYIEGYMHLNQRYDIWIRIGKNAIKKGLKSLIQIAKATMMLYKNELPFIEKIEAVYITDKDLVEKLLNELAMPIFEERDARVEALSDEDVDEFYSCTLCQSFAPTNVCIVSPDRPSLCGAITWFDGRAAAKVDPEGPNRAVPKGELLDPIGGEYSGVNEFAKQESGGEYERIKLHSFFEYPHTSCGCFEVIGFYMPEVDGIGWVHRGYAEPAPNGLTFSTMAGQTGGGKQVVGFLGIGIAYFRSKKFIQADGGWYRTVWMPKELKERVAKYIPDDIRDKIATEEDAKTLDELREFLKKVDHPVVKGVVRPVDGKKITNGWVEEEEEEAEEVAEEAAAEAAPAAQPAQAAQPMAMQPMPMQMPGFQLPALQMPAASAAPAGVKLVIKDAKITIEKVIIKKAEKEKKGGK.

The [Ni-Fe-S] cluster site is built by Cys-212, Cys-215, Cys-301, and Cys-303. The tract at residues 436 to 466 (WVEEEEEEAEEVAEEAAAEAAPAAQPAQAAQ) is disordered. Acidic residues predominate over residues 437–452 (VEEEEEEAEEVAEEAA). Positions 453–466 (AEAAPAAQPAQAAQ) are enriched in low complexity.

This sequence belongs to the CdhC family. As to quaternary structure, monomer. The ACDS complex is made up of alpha, epsilon, beta, gamma and delta chains with a probable stoichiometry of (alpha(2)epsilon(2))(4)-beta(8)-(gamma(1)delta(1))(8). [Ni-Fe-S] cluster is required as a cofactor.

The enzyme catalyses Co(I)-[corrinoid Fe-S protein] + acetyl-CoA + H(+) = methyl-Co(III)-[corrinoid Fe-S protein] + CO + CoA. Part of a complex that catalyzes the reversible cleavage of acetyl-CoA, allowing autotrophic growth from CO(2). The alpha-epsilon complex generates CO from CO(2), while the beta subunit (this protein) combines the CO with CoA and a methyl group to form acetyl-CoA. The methyl group, which is incorporated into acetyl-CoA, is transferred to the beta subunit by a corrinoid iron-sulfur protein (the gamma-delta complex). This is Acetyl-CoA decarbonylase/synthase complex subunit beta from Archaeoglobus fulgidus (strain ATCC 49558 / DSM 4304 / JCM 9628 / NBRC 100126 / VC-16).